The sequence spans 443 residues: Putative rhamnogalacturonase D (443 aa).

An N-terminal signal peptide occupies residues 1–16; the sequence is MLVTSLIALLPAIAAA. Cysteine 37 and cysteine 63 are disulfide-bonded. N-linked (GlcNAc...) asparagine glycosylation is found at asparagine 47, asparagine 103, asparagine 124, and asparagine 152. The Proton donor role is filled by aspartate 215. Cysteine 217 and cysteine 234 are joined by a disulfide. N-linked (GlcNAc...) asparagine glycans are attached at residues asparagine 235, asparagine 250, asparagine 263, asparagine 276, and asparagine 281. Cysteine 338 and cysteine 344 are disulfide-bonded. The N-linked (GlcNAc...) asparagine glycan is linked to asparagine 346. A disulfide bridge connects residues cysteine 366 and cysteine 375. N-linked (GlcNAc...) asparagine glycosylation occurs at asparagine 380.

This sequence belongs to the glycosyl hydrolase 28 family.

The protein resides in the secreted. Pectinolytic enzymes consist of four classes of enzymes: pectine lyase, polygalacturonase, pectin methylesterase and rhamnogalacturonase. Hydrolyzes alpha-D-galacturonopyranosyl-(1,2)-alpha-L-rhamnopyranosyl linkages in the backbone of the hairy regions of pectins. The chain is Putative rhamnogalacturonase D (rhgD) from Aspergillus niger (strain ATCC MYA-4892 / CBS 513.88 / FGSC A1513).